A 253-amino-acid polypeptide reads, in one-letter code: 3-deoxy-manno-octulosonate cytidylyltransferase (253 aa).

Belongs to the KdsB family.

It localises to the cytoplasm. It carries out the reaction 3-deoxy-alpha-D-manno-oct-2-ulosonate + CTP = CMP-3-deoxy-beta-D-manno-octulosonate + diphosphate. It functions in the pathway nucleotide-sugar biosynthesis; CMP-3-deoxy-D-manno-octulosonate biosynthesis; CMP-3-deoxy-D-manno-octulosonate from 3-deoxy-D-manno-octulosonate and CTP: step 1/1. Its pathway is bacterial outer membrane biogenesis; lipopolysaccharide biosynthesis. Activates KDO (a required 8-carbon sugar) for incorporation into bacterial lipopolysaccharide in Gram-negative bacteria. This is 3-deoxy-manno-octulosonate cytidylyltransferase from Idiomarina loihiensis (strain ATCC BAA-735 / DSM 15497 / L2-TR).